A 187-amino-acid chain; its full sequence is MAIGMSELKKGLKIELGGVPYRIVEYQHVKPGKGAAFVRAKIKSFLDGKVIEKTFHAGDKCEEPNLVEKTMQYLYHDGDTYQFMDIESYEQIALNDSQVGEASKWMLDGMQVQVLLHNDKAISVDVPQVVALKIVETAPNFKGDTSSASKKPATLETGAVVQVPFHVLEGETIKVNTETEEYLEKVK.

This sequence belongs to the elongation factor P family.

Its subcellular location is the cytoplasm. The protein operates within protein biosynthesis; polypeptide chain elongation. Involved in peptide bond synthesis. Stimulates efficient translation and peptide-bond synthesis on native or reconstituted 70S ribosomes in vitro. Probably functions indirectly by altering the affinity of the ribosome for aminoacyl-tRNA, thus increasing their reactivity as acceptors for peptidyl transferase. The protein is Elongation factor P (efp) of Helicobacter pylori (strain J99 / ATCC 700824) (Campylobacter pylori J99).